The primary structure comprises 401 residues: Type I restriction enzyme EcoprrI specificity subunit (401 aa).

Belongs to the type-I restriction system S methylase family. In terms of assembly, the type I restriction/modification system is composed of three polypeptides R, M and S; the restriction enzyme has stoichiometry R(2)M(2)S(1) while the methyltransferase is M(2)S(1).

The specificity (S) subunit of a type I restriction enzyme; this subunit dictates DNA sequence specificity. The M and S subunits together form a methyltransferase (MTase) that methylates two adenine residues of the sequence 5'-CCAN(7)ATGC-3'. In the presence of the R subunit the complex can also act as an endonuclease, binding to the same target sequence but cutting the DNA some distance from this site. Whether the DNA is cut or modified depends on the methylation state of the target sequence. When the target site is unmodified, the DNA is cut. When the target site is hemimethylated, the complex acts as a maintenance MTase modifying the DNA so that both strands become methylated. After locating a non-methylated recognition site, the enzyme complex serves as a molecular motor that translocates DNA in an ATP-dependent manner until a collision occurs that triggers cleavage. In Escherichia coli, this protein is Type I restriction enzyme EcoprrI specificity subunit (prrB).